The following is an 869-amino-acid chain: DNA mismatch repair protein MutS (869 aa).

ATP is bound at residue 618 to 625; it reads GPNMGGKS.

The protein belongs to the DNA mismatch repair MutS family.

This protein is involved in the repair of mismatches in DNA. It is possible that it carries out the mismatch recognition step. This protein has a weak ATPase activity. This chain is DNA mismatch repair protein MutS, found in Zymomonas mobilis subsp. mobilis (strain ATCC 31821 / ZM4 / CP4).